The sequence spans 338 residues: Delta(9)-fatty-acid desaturase fat-7 (338 aa).

A run of 4 helical transmembrane segments spans residues 51 to 71 (VALF…LVFH), 76 to 96 (TAVF…AGAH), 194 to 214 (YFPL…VYFW), and 218 to 238 (AFIA…HATW).

The protein belongs to the fatty acid desaturase type 1 family. As to expression, expressed in the intestine in adult worms and in all four larval stages.

Its subcellular location is the membrane. It catalyses the reaction octadecanoyl-CoA + 2 Fe(II)-[cytochrome b5] + O2 + 2 H(+) = (9Z)-octadecenoyl-CoA + 2 Fe(III)-[cytochrome b5] + 2 H2O. The enzyme catalyses hexadecanoyl-CoA + 2 Fe(II)-[cytochrome b5] + O2 + 2 H(+) = (9Z)-hexadecenoyl-CoA + 2 Fe(III)-[cytochrome b5] + 2 H2O. It carries out the reaction heptadecanoyl-CoA + 2 Fe(II)-[cytochrome b5] + O2 + 2 H(+) = (9Z)-heptadecenoyl-CoA + 2 Fe(III)-[cytochrome b5] + 2 H2O. The catalysed reaction is (11E)-octadecenoyl-CoA + 2 Fe(II)-[cytochrome b5] + O2 + 2 H(+) = (9Z,11E)-octadecadienoyl-CoA + 2 Fe(III)-[cytochrome b5] + 2 H2O. It functions in the pathway lipid metabolism; monounsaturated fatty acid biosynthesis. The protein operates within lipid metabolism; fatty acid metabolism. Delta(9)-fatty acid desaturase that acts preferentially on stearoyl-CoA (octadecanoyl-CoA) producing the monounsaturated oleoyl-CoA ((9Z)-octadecenoyl-CoA), one of the most abundant monounsaturated fatty acid in Caenorhabditis elegans phospholipids and triacylglycerols. Also acts on palmitoyl-CoA (hexadecanoyl-CoA), heptadecanoyl-CoA and (11E)-octadecenoyl-CoA (trans-vaccenoyl-CoA), the monounsaturated fatty acids (MUFAs) produced are further used by several other desaturases and elongases as substrates to synthesize polyunsaturated fatty acids (PUFAs) endogenously (PUFAs are essential for membrane structure and many cellular and physiological processes). Unlike plants, Caenorhabditis elegans desaturases seem to use fatty acyl-CoAs as substrates. Partially inhibits expression of genes involved in beta-oxidation, such as ech-1 and acs-2, perhaps signaling via the actions of one of its fatty acid products. May form part of a negative feedback loop with the transcription factor nhr-49 to limit beta-oxidation, in which nhr-49 stimulates expression of fat-7 and acs-2, and in turn fat-7 indirectly inhibits acs-2 and other genes also involved in beta-oxidation. The chain is Delta(9)-fatty-acid desaturase fat-7 (fat-7) from Caenorhabditis elegans.